A 212-amino-acid polypeptide reads, in one-letter code: 2',3'-cyclic-nucleotide 3'-phosphodiesterase (212 aa).

Histidine 51 functions as the Proton donor/acceptor in the catalytic mechanism. Threonine 53 contributes to the substrate binding site. Residue histidine 146 is the Proton donor/acceptor of the active site. The substrate site is built by serine 148 and tyrosine 151.

The protein belongs to the 2H phosphoesterase superfamily. CPD1 family.

It localises to the golgi apparatus. The enzyme catalyses a nucleoside 2',3'-cyclic phosphate + H2O = a nucleoside 2'-phosphate + H(+). Functionally, involved in the metabolism of ADP-ribose 1',2'-cyclic phosphate which is produced as a consequence of tRNA splicing. The sequence is that of 2',3'-cyclic-nucleotide 3'-phosphodiesterase (cpd-7) from Neurospora crassa (strain ATCC 24698 / 74-OR23-1A / CBS 708.71 / DSM 1257 / FGSC 987).